Consider the following 209-residue polypeptide: Transcription elongation factor A protein-like 4 (209 aa).

Met-1 is subject to N-acetylmethionine. The disordered stretch occupies residues 1–125 (MEKLYNENEG…VPRKAKRKTN (125 aa)). Basic and acidic residues predominate over residues 25 to 96 (QDERKPEVAC…GSEREGKPES (72 aa)). Ser-88 and Ser-96 each carry phosphoserine.

It belongs to the TFS-II family. TFA subfamily.

It is found in the nucleus. In terms of biological role, may be involved in transcriptional regulation. The polypeptide is Transcription elongation factor A protein-like 4 (TCEAL4) (Pongo abelii (Sumatran orangutan)).